A 160-amino-acid polypeptide reads, in one-letter code: uncharacterized protein (160 aa).

It is found in the mitochondrion. This is an uncharacterized protein from Arabidopsis thaliana (Mouse-ear cress).